Reading from the N-terminus, the 61-residue chain is Photosystem II reaction center protein K (61 aa).

The propeptide occupies 1 to 24 (MLNTFSLIGICLNSTLYSSSFFFG). A helical membrane pass occupies residues 36–56 (IVDIMPVIPLFFFLLAFVWQA).

The protein belongs to the PsbK family. PSII is composed of 1 copy each of membrane proteins PsbA, PsbB, PsbC, PsbD, PsbE, PsbF, PsbH, PsbI, PsbJ, PsbK, PsbL, PsbM, PsbT, PsbX, PsbY, PsbZ, Psb30/Ycf12, at least 3 peripheral proteins of the oxygen-evolving complex and a large number of cofactors. It forms dimeric complexes.

It is found in the plastid. It localises to the chloroplast thylakoid membrane. In terms of biological role, one of the components of the core complex of photosystem II (PSII). PSII is a light-driven water:plastoquinone oxidoreductase that uses light energy to abstract electrons from H(2)O, generating O(2) and a proton gradient subsequently used for ATP formation. It consists of a core antenna complex that captures photons, and an electron transfer chain that converts photonic excitation into a charge separation. This is Photosystem II reaction center protein K from Solanum bulbocastanum (Wild potato).